A 215-amino-acid chain; its full sequence is Protein N-lysine methyltransferase METTL21A (215 aa).

S-adenosyl-L-methionine is bound by residues Trp47, 73-75 (GAG), Asp94, Trp125, and Ala141.

This sequence belongs to the methyltransferase superfamily. METTL21 family.

It is found in the cytoplasm. It catalyses the reaction L-lysyl-[protein] + 3 S-adenosyl-L-methionine = N(6),N(6),N(6)-trimethyl-L-lysyl-[protein] + 3 S-adenosyl-L-homocysteine + 3 H(+). Its function is as follows. Protein-lysine methyltransferase that selectively trimethylates residues in heat shock protein 70 (HSP70) family members. This is Protein N-lysine methyltransferase METTL21A (mettl21a) from Xenopus tropicalis (Western clawed frog).